We begin with the raw amino-acid sequence, 127 residues long: Aspartate 1-decarboxylase (127 aa).

The active-site Schiff-base intermediate with substrate; via pyruvic acid is S25. Pyruvic acid (Ser) is present on S25. A substrate-binding site is contributed by T57. Residue Y58 is the Proton donor of the active site. 73-75 is a substrate binding site; it reads GAA.

The protein belongs to the PanD family. As to quaternary structure, heterooctamer of four alpha and four beta subunits. It depends on pyruvate as a cofactor. In terms of processing, is synthesized initially as an inactive proenzyme, which is activated by self-cleavage at a specific serine bond to produce a beta-subunit with a hydroxyl group at its C-terminus and an alpha-subunit with a pyruvoyl group at its N-terminus.

Its subcellular location is the cytoplasm. It catalyses the reaction L-aspartate + H(+) = beta-alanine + CO2. The protein operates within cofactor biosynthesis; (R)-pantothenate biosynthesis; beta-alanine from L-aspartate: step 1/1. In terms of biological role, catalyzes the pyruvoyl-dependent decarboxylation of aspartate to produce beta-alanine. This Clostridium botulinum (strain Okra / Type B1) protein is Aspartate 1-decarboxylase.